The chain runs to 647 residues: tRNA 5-methylaminomethyl-2-thiouridine biosynthesis bifunctional protein MnmC (647 aa).

Positions 1–227 are tRNA (mnm(5)s(2)U34)-methyltransferase; the sequence is MLTWKNNLTP…KREMLIGSYS (227 aa). An FAD-dependent cmnm(5)s(2)U34 oxidoreductase region spans residues 256-647; sequence VGAGIAGTTL…ARFLYRKVRK (392 aa).

The protein in the N-terminal section; belongs to the methyltransferase superfamily. tRNA (mnm(5)s(2)U34)-methyltransferase family. It in the C-terminal section; belongs to the DAO family. The cofactor is FAD.

The protein localises to the cytoplasm. The catalysed reaction is 5-aminomethyl-2-thiouridine(34) in tRNA + S-adenosyl-L-methionine = 5-methylaminomethyl-2-thiouridine(34) in tRNA + S-adenosyl-L-homocysteine + H(+). Functionally, catalyzes the last two steps in the biosynthesis of 5-methylaminomethyl-2-thiouridine (mnm(5)s(2)U) at the wobble position (U34) in tRNA. Catalyzes the FAD-dependent demodification of cmnm(5)s(2)U34 to nm(5)s(2)U34, followed by the transfer of a methyl group from S-adenosyl-L-methionine to nm(5)s(2)U34, to form mnm(5)s(2)U34. The protein is tRNA 5-methylaminomethyl-2-thiouridine biosynthesis bifunctional protein MnmC of Leptospira interrogans serogroup Icterohaemorrhagiae serovar copenhageni (strain Fiocruz L1-130).